The following is a 153-amino-acid chain: MQLHNLYPFPEERKTRRRVGRGSGSGLGCTAGKGHKGQNARAGGGVAPGFEGGQMPLQRRLPKHGFKNAPFKVTYDVINLDRLLEAFEGKDTITLDDIYARGLARMGAPVKILSRGEVKSALKVEAHKFSQTAAEKIRGAGGEVSELEAVPAA.

A disordered region spans residues 1 to 49; the sequence is MQLHNLYPFPEERKTRRRVGRGSGSGLGCTAGKGHKGQNARAGGGVAPG. The span at 21-31 shows a compositional bias: gly residues; the sequence is RGSGSGLGCTA.

Belongs to the universal ribosomal protein uL15 family. Part of the 50S ribosomal subunit.

Functionally, binds to the 23S rRNA. In Desulfovibrio desulfuricans (strain ATCC 27774 / DSM 6949 / MB), this protein is Large ribosomal subunit protein uL15.